The chain runs to 315 residues: Salivary protein SG34 (315 aa).

The signal sequence occupies residues 1-20 (MPVSYDFVILLALFIVLARS). A coiled-coil region spans residues 98 to 161 (NAEVELLRES…QEEIEQQTKQ (64 aa)).

Its function is as follows. (Microbial infection) Modulates replication of duck Tembusu virus in salivary glands and virus release into the saliva, probably via the regulation of antimicrobial peptides expression in response to duck Tembusu virus infection. The chain is Salivary protein SG34 from Aedes albopictus (Asian tiger mosquito).